We begin with the raw amino-acid sequence, 176 residues long: Inner membrane-spanning protein YciB (176 aa).

Transmembrane regions (helical) follow at residues 23–43 (MIAAAAVALVAGVVQAAFLYW), 50–70 (TMQWVGLVLIVVFGGATIVLG), 74–94 (FIMWKPTVLFWCGALFLLGSH), 119–139 (LTYMWVGFLIFMGIANWFVFT), and 150–170 (MFGSTALMLFFFIIQGIYLST).

Belongs to the YciB family.

It is found in the cell inner membrane. Functionally, plays a role in cell envelope biogenesis, maintenance of cell envelope integrity and membrane homeostasis. The sequence is that of Inner membrane-spanning protein YciB from Neisseria gonorrhoeae (strain ATCC 700825 / FA 1090).